We begin with the raw amino-acid sequence, 117 residues long: DNA-directed RNA polymerase subunit omega (117 aa).

Belongs to the RNA polymerase subunit omega family. As to quaternary structure, the RNAP catalytic core consists of 2 alpha, 1 beta, 1 beta' and 1 omega subunit. When a sigma factor is associated with the core the holoenzyme is formed, which can initiate transcription.

It carries out the reaction RNA(n) + a ribonucleoside 5'-triphosphate = RNA(n+1) + diphosphate. Functionally, promotes RNA polymerase assembly. Latches the N- and C-terminal regions of the beta' subunit thereby facilitating its interaction with the beta and alpha subunits. In Roseobacter denitrificans (strain ATCC 33942 / OCh 114) (Erythrobacter sp. (strain OCh 114)), this protein is DNA-directed RNA polymerase subunit omega.